The chain runs to 702 residues: Putative GMC-type oxidoreductase R135 (702 aa).

A helical membrane pass occupies residues 55–75; sequence LTGDIVIIGAGAAGSLLAHYL. 58–88 is a binding site for FAD; that stretch reads DIVIIGAGAAGSLLAHYLARFSNMKIILLEA. Residue His-628 is part of the active site.

It belongs to the GMC oxidoreductase family. Requires FAD as cofactor.

It localises to the virion. The protein resides in the host membrane. The polypeptide is Putative GMC-type oxidoreductase R135 (Acanthamoeba polyphaga (Amoeba)).